A 391-amino-acid polypeptide reads, in one-letter code: FLUCTUATING-LIGHT-ACCLIMATION protein 1, chloroplastic (391 aa).

A chloroplast-targeting transit peptide spans 1 to 48; it reads MASSSTFLELTPFQWNQPLPYTQRPHHRTVLLYSKPQRRSNSIRLQIS. The chain crosses the membrane as a helical span at residues 87 to 107; it reads AIAAVLLGLLLFYDPNSALAA. A compositionally biased stretch (low complexity) spans 116-138; sequence SFSSRSRSSSSSSSQSYSVPRTS. Residues 116–140 are disordered; sequence SFSSRSRSSSSSSSQSYSVPRTSNP. The next 2 helical transmembrane spans lie at 168–188 and 321–341; these read FGFG…AFVL and YIVV…PING.

This sequence belongs to the FLAP family.

Its subcellular location is the plastid. The protein resides in the chloroplast thylakoid membrane. It localises to the chloroplast membrane. The protein localises to the chloroplast envelope. In terms of biological role, monitors proton H(+) homeostasis in chloroplasts to manipulate luminal acidification levels appropriately to balance photoprotection and photochemical processes. Required during acclimation response to fluctuating light (e.g. photosynthetic activity optimization) by controlling non-photochemical quenching (NPQ); acts independently from DLDG1. This Arabidopsis thaliana (Mouse-ear cress) protein is FLUCTUATING-LIGHT-ACCLIMATION protein 1, chloroplastic.